A 126-amino-acid chain; its full sequence is Fluoride-specific ion channel FluC (126 aa).

Transmembrane regions (helical) follow at residues 2-22 (LTFAPLNFLAIGVGATLGAWL), 37-57 (WGTLTANLVGGYLIGVMVALI), 65-85 (AWIRLAAVTGFLGGLTTFSTF), and 101-121 (AAAYAGASLAGSLAMTGLATV). Na(+)-binding residues include G77 and T80.

It belongs to the fluoride channel Fluc/FEX (TC 1.A.43) family.

The protein localises to the cell inner membrane. It catalyses the reaction fluoride(in) = fluoride(out). Na(+) is not transported, but it plays an essential structural role and its presence is essential for fluoride channel function. Fluoride-specific ion channel. Important for reducing fluoride concentration in the cell, thus reducing its toxicity. This chain is Fluoride-specific ion channel FluC, found in Bordetella parapertussis (strain 12822 / ATCC BAA-587 / NCTC 13253).